A 163-amino-acid chain; its full sequence is Phosphopantetheine adenylyltransferase (163 aa).

Thr-10 lines the substrate pocket. ATP-binding positions include 10-11 (TF) and His-18. Residues Lys-42, Leu-74, and Arg-88 each contribute to the substrate site. ATP contacts are provided by residues 89 to 91 (GLR), Glu-99, and 124 to 130 (NSFISST).

This sequence belongs to the bacterial CoaD family. Homohexamer. Mg(2+) is required as a cofactor.

The protein localises to the cytoplasm. It carries out the reaction (R)-4'-phosphopantetheine + ATP + H(+) = 3'-dephospho-CoA + diphosphate. It functions in the pathway cofactor biosynthesis; coenzyme A biosynthesis; CoA from (R)-pantothenate: step 4/5. In terms of biological role, reversibly transfers an adenylyl group from ATP to 4'-phosphopantetheine, yielding dephospho-CoA (dPCoA) and pyrophosphate. The polypeptide is Phosphopantetheine adenylyltransferase (Shewanella sp. (strain MR-4)).